We begin with the raw amino-acid sequence, 416 residues long: MQQTAALPKRLSCDRCYAQKLRCPRPSTNDDASCIRCLRQKVQCVYSTALPKGRPRAAVRACAAGAGATAGAPPITTTTTTAAPSSSDTAPPIFSTEDLASLTGLSTSGWLPDPTWEDSFCFLSSQVVPQPPPLDTTPPPRSLSASGLDNPENCVGRLSDLATRLHAVYQTTRALSDHPLITNAAFEAVTTLFNAPLSPPSAATTAATTNLRETFTSSRHLLETISHLLWATPNNNPSTAPAAAADETVIYHFTIACYSLLLLIYATLLTALHRDALTHTQPSLSTTTTTTGPDNNTSTWCSAPSLVELRLVLLFHMITYFLDRLQQMIRMYTAEFEKQASNSTTGRRPPTSGRWSEEVEEMMVVEEPWEREQHIPPPPPPTSSLGSISELETQARAALMQLRMSLVATRGGLVDN.

The segment at residues 13 to 44 is a DNA-binding region (zn(2)-C6 fungal-type); that stretch reads CDRCYAQKLRCPRPSTNDDASCIRCLRQKVQC. Disordered stretches follow at residues 68 to 90 and 130 to 150; these read ATAG…SDTA and QPPP…GLDN. Residues 130 to 141 are compositionally biased toward pro residues; it reads QPPPLDTTPPPR. 2 helical membrane passes run 249-269 and 302-322; these read VIYH…ATLL and SAPS…TYFL.

It localises to the membrane. The protein localises to the nucleus. Functionally, transcription factor that positively regulates the expression of the gene cluster that mediates the biosynthesis of the acyltetronic acid derivatives carlosic acid, agglomerin F and carlosic acid methyl ether. The chain is Transcription factor caaR from Aspergillus niger (strain ATCC MYA-4892 / CBS 513.88 / FGSC A1513).